The sequence spans 109 residues: Putative double-stranded DNA mimic protein YciU (109 aa).

Belongs to the putative dsDNA mimic protein family.

Functionally, may act as a double-stranded DNA (dsDNA) mimic. Probably regulates the activity of a dsDNA-binding protein. The sequence is that of Putative double-stranded DNA mimic protein YciU from Salmonella arizonae (strain ATCC BAA-731 / CDC346-86 / RSK2980).